Consider the following 79-residue polypeptide: Beta-hexatoxin-Mg1a (79 aa).

A signal peptide spans 1–20; the sequence is MKAPATTLILVMSLISVLWA. Residues 21-50 constitute a propeptide that is removed on maturation; sequence TPDLEEGDLLAELGDLIATDDEYPMKPEER. Cystine bridges form between Cys-52-Cys-66, Cys-59-Cys-71, and Cys-65-Cys-76.

Belongs to the neurotoxin 15 family. 01 (magi-5) subfamily. In terms of tissue distribution, expressed by the venom gland.

The protein localises to the secreted. Insect and vertebrate active toxin. Binds to site 4 of mammalian voltage-gated sodium channels and shifts the activation voltage of the mammalian Nav1.2a/SCN2A channel to more hyperpolarized voltages, whereas the insect channel, DmNav1 (para), is not affected. Competes for binding at site 3 of the insect sodium channel. Causes temporary paralysis when injected into lepidopteran larvae at 8.6 nmol/g. A low intracranial injection dose into mice causes lacrimation, closure of the eyes and sweating. A high injection dose causes extensive lacrimation and death. The sequence is that of Beta-hexatoxin-Mg1a from Macrothele gigas (Japanese funnel web spider).